The sequence spans 328 residues: DNA-directed RNA polymerase subunit alpha (328 aa).

The interval 1 to 231 is alpha N-terminal domain (alpha-NTD); that stretch reads MIYQMQMPAK…EHVTFFANFS (231 aa). An alpha C-terminal domain (alpha-CTD) region spans residues 247–328; the sequence is DEFETMRRLL…MDITRYQMKG (82 aa).

It belongs to the RNA polymerase alpha chain family. As to quaternary structure, homodimer. The RNAP catalytic core consists of 2 alpha, 1 beta, 1 beta' and 1 omega subunit. When a sigma factor is associated with the core the holoenzyme is formed, which can initiate transcription.

It carries out the reaction RNA(n) + a ribonucleoside 5'-triphosphate = RNA(n+1) + diphosphate. Its function is as follows. DNA-dependent RNA polymerase catalyzes the transcription of DNA into RNA using the four ribonucleoside triphosphates as substrates. The polypeptide is DNA-directed RNA polymerase subunit alpha (Chlorobium luteolum (strain DSM 273 / BCRC 81028 / 2530) (Pelodictyon luteolum)).